A 181-amino-acid polypeptide reads, in one-letter code: S-fimbrial protein subunit SfaA (181 aa).

An N-terminal signal peptide occupies residues 1-24 (MKLKFISMAVFSALTLGVATNASA). A disulfide bond links Cys-44 and Cys-84.

The protein belongs to the fimbrial protein family.

It localises to the fimbrium. Its function is as follows. Fimbriae (also called pili), polar filaments radiating from the surface of the bacterium to a length of 0.5-1.5 micrometers and numbering 100-300 per cell, enable bacteria to colonize the epithelium of specific host organs. The major fimbrial subunit. Interacts with alpha-sialic acid-(2-3)-beta-Gal containing receptors. It belongs to the group of Mrh (Mannose-resistant hemagglutination) fimbrial proteins. The protein is S-fimbrial protein subunit SfaA (sfaA) of Escherichia coli O6:K15:H31 (strain 536 / UPEC).